We begin with the raw amino-acid sequence, 408 residues long: Phosphoglycerate kinase (408 aa).

Residues 24–26 (DLN), Arg39, 62–65 (HLGR), Arg121, and Arg161 each bind substrate. ATP contacts are provided by residues Lys211, Gly307, Glu338, and 364–367 (GGDS).

The protein belongs to the phosphoglycerate kinase family. As to quaternary structure, monomer.

The protein localises to the cytoplasm. It carries out the reaction (2R)-3-phosphoglycerate + ATP = (2R)-3-phospho-glyceroyl phosphate + ADP. The protein operates within carbohydrate degradation; glycolysis; pyruvate from D-glyceraldehyde 3-phosphate: step 2/5. This chain is Phosphoglycerate kinase, found in Arthrobacter sp. (strain FB24).